The sequence spans 1377 residues: DNA-directed RNA polymerase subunit beta (1377 aa).

The protein belongs to the RNA polymerase beta chain family. In terms of assembly, the RNAP catalytic core consists of 2 alpha, 1 beta, 1 beta' and 1 omega subunit. When a sigma factor is associated with the core the holoenzyme is formed, which can initiate transcription.

It carries out the reaction RNA(n) + a ribonucleoside 5'-triphosphate = RNA(n+1) + diphosphate. Its function is as follows. DNA-dependent RNA polymerase catalyzes the transcription of DNA into RNA using the four ribonucleoside triphosphates as substrates. The sequence is that of DNA-directed RNA polymerase subunit beta from Campylobacter lari (strain RM2100 / D67 / ATCC BAA-1060).